The chain runs to 508 residues: UDP-N-acetylmuramoyl-L-alanyl-D-glutamate--2,6-diaminopimelate ligase (508 aa).

Residue S33 coordinates UDP-N-acetyl-alpha-D-muramoyl-L-alanyl-D-glutamate. 121–127 (GTNGKST) is an ATP binding site. Residues N162, 163 to 164 (TT), S190, Q196, and R198 each bind UDP-N-acetyl-alpha-D-muramoyl-L-alanyl-D-glutamate. At K230 the chain carries N6-carboxylysine. Meso-2,6-diaminopimelate is bound by residues R399, 423-426 (DNPR), G474, and E478. Residues 423 to 426 (DNPR) carry the Meso-diaminopimelate recognition motif motif.

The protein belongs to the MurCDEF family. MurE subfamily. Requires Mg(2+) as cofactor. In terms of processing, carboxylation is probably crucial for Mg(2+) binding and, consequently, for the gamma-phosphate positioning of ATP.

The protein resides in the cytoplasm. It catalyses the reaction UDP-N-acetyl-alpha-D-muramoyl-L-alanyl-D-glutamate + meso-2,6-diaminopimelate + ATP = UDP-N-acetyl-alpha-D-muramoyl-L-alanyl-gamma-D-glutamyl-meso-2,6-diaminopimelate + ADP + phosphate + H(+). Its pathway is cell wall biogenesis; peptidoglycan biosynthesis. Its function is as follows. Catalyzes the addition of meso-diaminopimelic acid to the nucleotide precursor UDP-N-acetylmuramoyl-L-alanyl-D-glutamate (UMAG) in the biosynthesis of bacterial cell-wall peptidoglycan. The protein is UDP-N-acetylmuramoyl-L-alanyl-D-glutamate--2,6-diaminopimelate ligase of Buchnera aphidicola subsp. Baizongia pistaciae (strain Bp).